Consider the following 280-residue polypeptide: Energy-coupling factor transporter ATP-binding protein EcfA1 (280 aa).

The 236-residue stretch at 6–241 folds into the ABC transporter domain; it reads LRTENISFQY…SHMLQEIGLD (236 aa). Residue 40-47 coordinates ATP; that stretch reads GQNGSGKS.

It belongs to the ABC transporter superfamily. Energy-coupling factor EcfA family. As to quaternary structure, forms a stable energy-coupling factor (ECF) transporter complex composed of 2 membrane-embedded substrate-binding proteins (S component), 2 ATP-binding proteins (A component) and 2 transmembrane proteins (T component).

Its subcellular location is the cell membrane. Functionally, ATP-binding (A) component of a common energy-coupling factor (ECF) ABC-transporter complex. Unlike classic ABC transporters this ECF transporter provides the energy necessary to transport a number of different substrates. This Bacillus cereus (strain ZK / E33L) protein is Energy-coupling factor transporter ATP-binding protein EcfA1.